We begin with the raw amino-acid sequence, 374 residues long: Gibberellin 3-beta-dioxygenase 1 (374 aa).

The Fe2OG dioxygenase domain occupies 206–307 (KACAALQLNS…RFSVAYLYGP (102 aa)). Fe cation-binding residues include His231, Asp233, and His288. Arg298 is an active-site residue. A 2-oxoglutarate-binding site is contributed by Arg298.

It belongs to the iron/ascorbate-dependent oxidoreductase family. GA3OX subfamily. The cofactor is L-ascorbate. It depends on Fe(2+) as a cofactor. Expressed in radicles, roots, internodes, cotyledons, leaves and shoots. Barely detected in developing seeds. Not detected in flowers or young fruits.

The catalysed reaction is gibberellin A20 + 2-oxoglutarate + O2 = gibberellin A1 + succinate + CO2. The protein operates within plant hormone biosynthesis; gibberellin biosynthesis. Converts the inactive gibberellin (GA) precursors GA9 and GA20 in the bioactives gibberellins GA4 and GA1. Has a small activity on GA29, producing GA8. Unable to convert GA20 to GA5, GA5 to GA3 or GA12 to GA14. Involved in the production of bioactive GA for vegetative growth and development, but not for the 3-beta-hydroxylation of GA in developing seeds. This chain is Gibberellin 3-beta-dioxygenase 1 (LE), found in Pisum sativum (Garden pea).